Here is a 485-residue protein sequence, read N- to C-terminus: Ribulose bisphosphate carboxylase large chain (485 aa).

Positions 1–2 (MS) are excised as a propeptide. An N-acetylproline modification is found at P3. At K14 the chain carries N6,N6,N6-trimethyllysine. Substrate-binding residues include N123 and T173. The active-site Proton acceptor is K175. K177 provides a ligand contact to substrate. Residues K201, D203, and E204 each coordinate Mg(2+). At K201 the chain carries N6-carboxylysine. H294 acts as the Proton acceptor in catalysis. Substrate-binding residues include R295, H327, and S379.

The protein belongs to the RuBisCO large chain family. Type I subfamily. Heterohexadecamer of 8 large chains and 8 small chains; disulfide-linked. The disulfide link is formed within the large subunit homodimers. Mg(2+) is required as a cofactor. Post-translationally, the disulfide bond which can form in the large chain dimeric partners within the hexadecamer appears to be associated with oxidative stress and protein turnover.

It is found in the plastid. The protein localises to the chloroplast. It carries out the reaction 2 (2R)-3-phosphoglycerate + 2 H(+) = D-ribulose 1,5-bisphosphate + CO2 + H2O. It catalyses the reaction D-ribulose 1,5-bisphosphate + O2 = 2-phosphoglycolate + (2R)-3-phosphoglycerate + 2 H(+). In terms of biological role, ruBisCO catalyzes two reactions: the carboxylation of D-ribulose 1,5-bisphosphate, the primary event in carbon dioxide fixation, as well as the oxidative fragmentation of the pentose substrate in the photorespiration process. Both reactions occur simultaneously and in competition at the same active site. The sequence is that of Ribulose bisphosphate carboxylase large chain from Flaveria pringlei.